We begin with the raw amino-acid sequence, 374 residues long: Tetraacyldisaccharide 4'-kinase (374 aa).

66–73 serves as a coordination point for ATP; sequence TAGGTGKT.

Belongs to the LpxK family.

It catalyses the reaction a lipid A disaccharide + ATP = a lipid IVA + ADP + H(+). It functions in the pathway glycolipid biosynthesis; lipid IV(A) biosynthesis; lipid IV(A) from (3R)-3-hydroxytetradecanoyl-[acyl-carrier-protein] and UDP-N-acetyl-alpha-D-glucosamine: step 6/6. In terms of biological role, transfers the gamma-phosphate of ATP to the 4'-position of a tetraacyldisaccharide 1-phosphate intermediate (termed DS-1-P) to form tetraacyldisaccharide 1,4'-bis-phosphate (lipid IVA). The sequence is that of Tetraacyldisaccharide 4'-kinase from Syntrophus aciditrophicus (strain SB).